The following is a 673-amino-acid chain: uncharacterized protein (673 aa).

The Cytoplasmic portion of the chain corresponds to 1–208 (MSTHSNDYFS…STGQLELPPD (208 aa)). Residues serine 57, serine 112, and serine 172 each carry the phosphoserine modification. The chain crosses the membrane as a helical span at residues 209 to 229 (GGYGWVVTFCVFLTMFSTWGC). N-linked (GlcNAc...) asparagine glycosylation is present at asparagine 230. At 230-255 (NASFGVDLAYYLNHDTYPGASKYDYA) the chain is on the lumenal side. Residues 256-276 (LIAGLTVFLGQLLSPLVMALM) traverse the membrane as a helical segment. A topological domain (cytoplasmic) is located at residue arginine 277. Residues 278-298 (IIGLRTTMLFGDAVMLAAYLL) form a helical membrane-spanning segment. Over 299–315 (ASFTTKLWQLYVTQGFM) the chain is Lumenal. Residues 316 to 336 (VGCSISLIFVPATTVLPGWFL) traverse the membrane as a helical segment. Topologically, residues 337–339 (KKR) are cytoplasmic. Residues 340-360 (AVAMGVSLLGTGAGGVVYGLA) traverse the membrane as a helical segment. Topologically, residues 361 to 372 (TNKMLSDFGNTR) are lumenal. A helical membrane pass occupies residues 373–393 (WCLRIIGISCSISVLVAIALL). Topologically, residues 394–426 (KERNPTPAIGLKSPRAMFEQLKAMFSLKVITKP) are cytoplasmic. A helical membrane pass occupies residues 427–447 (FVVLIALWFMFALFAYNMMVF). Residues 448-504 (TLSSYAISKGLSSHDASTLTAILNGSQSIGRPLMGLAGDKFGRANVTIVLTTLLTIY) are Lumenal-facing. N-linked (GlcNAc...) asparagine glycans are attached at residues asparagine 471 and asparagine 492. The chain crosses the membrane as a helical span at residues 505 to 525 (MFAFWIPAHTFVQLIFFSILV). Over 526-549 (GSCVGVANVMNTVLIADMVKPEEF) the chain is Cytoplasmic. Residues 550 to 570 (LPAWAFVNYCGAPFLLVCEVI) traverse the membrane as a helical segment. Residues 571 to 584 (AQALTVEKDKSNPY) lie on the Lumenal side of the membrane. The helical transmembrane segment at 585–605 (LHAQIFCGCCFIAALILISIL) threads the bilayer. The Cytoplasmic portion of the chain corresponds to 606 to 673 (REYSIRMKLT…FLRMVYPMKV (68 aa)). Serine 637 is modified (phosphoserine).

Belongs to the major facilitator superfamily. Monocarboxylate porter (TC 2.A.1.13) family.

It is found in the endoplasmic reticulum membrane. This is an uncharacterized protein from Saccharomyces cerevisiae (strain ATCC 204508 / S288c) (Baker's yeast).